An 85-amino-acid polypeptide reads, in one-letter code: Antibacterial factor-related peptide 1 (85 aa).

The first 19 residues, 1 to 19 (MLYFCLLLVLLLPNNGVSS), serve as a signal peptide directing secretion.

Expressed in the pharynx and body wall muscle.

It is found in the secreted. This Caenorhabditis elegans protein is Antibacterial factor-related peptide 1.